The sequence spans 156 residues: Small ribosomal subunit protein uS7c (156 aa).

This sequence belongs to the universal ribosomal protein uS7 family. Part of the 30S ribosomal subunit.

The protein localises to the plastid. Its subcellular location is the chloroplast. Its function is as follows. One of the primary rRNA binding proteins, it binds directly to 16S rRNA where it nucleates assembly of the head domain of the 30S subunit. This is Small ribosomal subunit protein uS7c (rps7) from Nephroselmis olivacea (Green alga).